A 203-amino-acid chain; its full sequence is Lectin (203 aa).

The signal sequence occupies residues 1–20 (MINILHVIAGLALASVGVDA). Positions 21–53 (RQVGVGADVLHAVENTIDSITGVEASHSALEVG) are excised as a propeptide.

In terms of assembly, monomer.

Functionally, N-acetyl-D-glucosamine-specific lectin. Specifically agglutinates rabbit erythrocytes. This is Lectin (UPL1) from Ulva pertusa (Sea lettuce).